Reading from the N-terminus, the 292-residue chain is Ribosomal protein L11 methyltransferase (292 aa).

S-adenosyl-L-methionine is bound by residues threonine 136, glycine 159, aspartate 181, and asparagine 228.

This sequence belongs to the methyltransferase superfamily. PrmA family.

The protein localises to the cytoplasm. It carries out the reaction L-lysyl-[protein] + 3 S-adenosyl-L-methionine = N(6),N(6),N(6)-trimethyl-L-lysyl-[protein] + 3 S-adenosyl-L-homocysteine + 3 H(+). Its function is as follows. Methylates ribosomal protein L11. The polypeptide is Ribosomal protein L11 methyltransferase (Rhizobium leguminosarum bv. trifolii (strain WSM2304)).